The primary structure comprises 391 residues: Ferrochelatase (391 aa).

Residues H196 and E281 each contribute to the Fe cation site.

The protein belongs to the ferrochelatase family.

It localises to the cytoplasm. The catalysed reaction is heme b + 2 H(+) = protoporphyrin IX + Fe(2+). The protein operates within porphyrin-containing compound metabolism; protoheme biosynthesis; protoheme from protoporphyrin-IX: step 1/1. In terms of biological role, catalyzes the ferrous insertion into protoporphyrin IX. This Prochlorococcus marinus (strain MIT 9515) protein is Ferrochelatase.